The sequence spans 1995 residues: MITFTFMSLVTSVKDYVEITHKLIEIEPLKNYTEFGAVFTYFIFSIGEFFKNFFSFSFLNNIWSIPIIIPDIASAMISEVSVLDGYFHNAFTFLETSVNTTTNPSLVIFEKFVIGIINSLFLILPTSTSHLITLRRFVMQGLEAGYMAGLGTLAGNFLWLASIILGWRFFVIPWLSLDIFRYLLGFVLLVKYIWDSSKERRMALEDLSKWKIFLLNFLLALTEQSCIYPFISNLSFGPDASILEGFPVDNYPQFLLIHGAYLLGILFGSFSLLQFTCWFWENPAFSIYLWITTKSSLKISTSSYYKILNFTFLYATMLCAIASIPYYGLDYTITNPIGLVPQDRILNQKKSQSDPDKLITETAFLNLNPTDKNSRIRDGVHARRERWKQRLIKYQAFDASTYDQGVYDFLTIEDLNYGFDRFWLRRKMRNHQIRFRLFPGPWMRSLKKQLNNPANPSLETSTKAASGPRVEFFRILFEQFYHPNFHDRAAMQTNPAEARNKFISTSPLASTESKKALNSTFSLGNINNSSTGIEGLVLTNTQATLLPTDLQTKRTIKPGLIYTNSALRKFVRNVNTRLNLKLLNSKETNLTTKYKSQFIYSKRWKSIFSKIQPLQNGTTRKSYQLFRNVAKQILVTPDAKSLKLITINQKLSLKERKLLELRTQYNNNSTLTTTAPLTLVRPLNVYLQKEEAFKRKLRYYGTMPMRKLTVGNQAPYFKALMKRGFYYYKPTLRWRKTLYVASLRRGFRKKSRKQRILVMPSNQQNFNNTLDNTKTNINQNNLANPLGGNEVPMYGADGENSLITKPTHSYTVLGKRASRYRHQIYKDVLQHWYYTPFNRLLMKFDVDAFINRQPKSHFLTKNEERALHIRRFLLSEHYDTLRWYTYMQHYKTMKTNIGGTKSFANRAYNQQFQGTFKKIRHLFAITPKQGDFYTLKFDQPLYNDNKLKDNLYFHEELLTDYYNGTNLQTNQTSNISVNSTTTFIDNSLRTTQLPVPSSSFDIVNQSSTLIGLTTMQNALRKNVVESTLTSLNSDGEAATSQPKLNFVYSELFVKLIKECKKRIHDQTFLKNYITHRIEKREQLNQEQTKELNKRLEKLKVWLNSDKGSISKLQNTPVQDPNISSPDKVLTTAMQKAVNESISLSGIMPSDKIKTTYGNLTNAYTIKTENAILTKLNVINQLTNNETTTQKNTLIKSIGVNKIQTVLQTIITNFKSSLYNQTQLLRVKTDKDLQWWRTKQRVITKRKSARKRDRFKKQIAVVNKKLAALSKKVETEKSNLYQTLYGNYEISDYLLRNVPTGSSAVIDSTVLRKKQDNQAYLPKETNNVQFNSFVDSNNNVWQTFFAKKLRKKISSKGRRYRSLSLARYLTATRKPRLVGLDNLTKIDNITTLQGAFITKEEKQDSLNLTIQRKQELTNSLKKSQIKKRSRHSWKKRSRHQFSRNHYKYRKRHTHGNGKLRVMNKKLKKFKATNELRQWWWNSFLPRYLSNLQVNNSTLTNKNVSFKPLSNTNSVPSTNMASPTTSRNLLDNLNSSNQISTSASMNQNIVTESVKVETNQVYLPEGEKSFDITSMTTTLPFYAGWDESLKKFVVTNRLLSRRDAGLSVNNNPQEINFTNPPIQGLNEGSFLYWQTEMPFNSYNIDQFITTNQSFYAPLGWRRFEFRHSILKTWVNNTKAGNNNIKKKTLIISLKNLQPLKSSQQKQNQIKTKKLVARRIKKRYKLLKQMPNQLMYSPTGPLLTEVLPSHYISVFDQQYRLPRNRYLKRNPLKTLKKTTLLALMDSSKQTNGVNKEFTLRKRVKPRRKYHRKRFIKKDGLIFPRRTKFNTNTTLTGNALITNNVNSIEEDDLRWRPSSRTKQKRKDNTRSSAASKTKSNKRVKTNPLRLRQLRRREFQQVLKPLQRYIPQNGGFTWPGDYLRLEIVEMPKLKSINIKKTSLKQKINVQPVGIMPRKYLIEKHNIKVLKKKLSQAYSTQQLTKVVQEYKNLIQNSPPAI.

7 helical membrane-spanning segments follow: residues 31–51 (NYTE…EFFK), 53–73 (FFSF…PDIA), 106–126 (LVIF…ILPT), 157–177 (FLWL…WLSL), 212–232 (IFLL…PFIS), 254–274 (FLLI…SLLQ), and 307–327 (ILNF…IPYY). 2 disordered regions span residues 1418-1441 (SLKK…HQFS) and 1848-1883 (DLRW…KTNP). 2 stretches are compositionally biased toward basic residues: residues 1422-1441 (SQIK…HQFS) and 1853-1863 (PSSRTKQKRKD).

It belongs to the ycf78 family.

It localises to the plastid. The protein localises to the chloroplast membrane. In terms of biological role, essential for cell growth. May be involved in binding chloroplast DNA to either the chloroplast envelope or the thylakoid membrane. This is an uncharacterized protein from Chlamydomonas reinhardtii (Chlamydomonas smithii).